A 1043-amino-acid chain; its full sequence is Constitutive coactivator of PPAR-gamma-like protein 1 homolog (1043 aa).

2 disordered regions span residues 353-497 (SMVP…HMQI) and 929-1043 (YGRG…NKEE). Polar residues-rich tracts occupy residues 362 to 375 (QMLN…QSRP) and 405 to 419 (SPIN…NHVD). Basic and acidic residues-rich tracts occupy residues 451 to 471 (TWDK…EQAK) and 951 to 964 (EVAK…EDSK). The interval 801–1043 (VELATKVEKM…LEGAVANKEE (243 aa)) is RNA binding. The segment covering 995-1010 (EARASSNSESALSSDS) has biased composition (low complexity).

It belongs to the constitutive coactivator of PPAR-gamma family.

The protein localises to the cytoplasm. Its subcellular location is the cell membrane. May bee involved in the oxidative stress-induced survival signaling. Binds RNA. May participate in mRNA transport in the cytoplasm. The polypeptide is Constitutive coactivator of PPAR-gamma-like protein 1 homolog (fam120a) (Xenopus tropicalis (Western clawed frog)).